Reading from the N-terminus, the 1227-residue chain is Methionine synthase (1227 aa).

The region spanning 2–325 is the Hcy-binding domain; the sequence is SSKVEQLRAQ…EHIAAMSRAV (324 aa). Cysteine 247, cysteine 310, and cysteine 311 together coordinate Zn(2+). The Pterin-binding domain maps to 356–617; the sequence is FVNVGERTNV…LPAELRDAVE (262 aa). Residues 650–744 enclose the B12-binding N-terminal domain; the sequence is QQAEWRSWDV…FIEASKEKGS (95 aa). Methylcob(III)alamin contacts are provided by residues glutamate 694, 756–760, histidine 759, serine 804, threonine 808, and alanine 860; that span reads GDVHD. Residues 746–881 form the B12-binding domain; the sequence is NGKMVIATVK…SDTQRDDFVA (136 aa). The AdoMet activation domain occupies 897–1227; sequence KKPRTPPVTL…LAPNLGYDAD (331 aa). Residues aspartate 946, arginine 1134, and 1189–1190 each bind S-adenosyl-L-methionine; that span reads YF.

It belongs to the vitamin-B12 dependent methionine synthase family. Requires methylcob(III)alamin as cofactor. It depends on Zn(2+) as a cofactor.

The enzyme catalyses (6S)-5-methyl-5,6,7,8-tetrahydrofolate + L-homocysteine = (6S)-5,6,7,8-tetrahydrofolate + L-methionine. The protein operates within amino-acid biosynthesis; L-methionine biosynthesis via de novo pathway; L-methionine from L-homocysteine (MetH route): step 1/1. Catalyzes the transfer of a methyl group from methyl-cobalamin to homocysteine, yielding enzyme-bound cob(I)alamin and methionine. Subsequently, remethylates the cofactor using methyltetrahydrofolate. The protein is Methionine synthase (metH) of Salmonella typhimurium (strain LT2 / SGSC1412 / ATCC 700720).